The sequence spans 360 residues: Epoxide hydrolase 3 (360 aa).

The chain crosses the membrane as a helical span at residues 22–42; it reads AFMWSLVFSVALVAAAVYGCI. Residue Asp173 is the Nucleophile of the active site. Catalysis depends on Tyr281, which acts as the Proton donor. His337 (proton acceptor) is an active-site residue.

The protein belongs to the AB hydrolase superfamily. Epoxide hydrolase family.

The protein localises to the microsome membrane. It catalyses the reaction an epoxide + H2O = an ethanediol. It carries out the reaction 9,10-epoxyoctadecanoate + H2O = 9,10-dihydroxyoctadecanoate. The enzyme catalyses 9,10-epoxy-(12Z)-octadecenoate + H2O = 9,10-dihydroxy-(12Z)-octadecenoate. The catalysed reaction is 8,9-epoxy-(5Z,11Z,14Z)-eicosatrienoate + H2O = 8,9-dihydroxy-(5Z,11Z,14Z)-eicosatrienoate. It catalyses the reaction 11,12-epoxy-(5Z,8Z,14Z)-eicosatrienoate + H2O = 11,12-dihydroxy-(5Z,8Z,14Z)-eicosatrienoate. It carries out the reaction 14,15-epoxy-(5Z,8Z,11Z)-eicosatrienoate + H2O = 14,15-dihydroxy-(5Z,8Z,11Z)-eicosatrienoate. Its activity is regulated as follows. Inhibited by 1-(1-acetylpiperidin-4-yl)-3-(4-(trifl uoromethoxy)phenyl)urea (TPAU), 1-cyclohexyl-3-dodecylurea (CDU), 12-(3-adamantan-1-yl-ureido)-dodecanoic acid (AUDA), 1-((3S, 5S, 7S)-adamantan-1-yl)-3-(5-(2-(2-ethoxyethoxy) ethoxy)pentyl)urea (AEPU) and to a lesser extent by 8-(3-((3S, 5S, 7S)-adamantan-1-yl)ureido) octanoic acid (AUOA). Catalyzes the hydrolysis of epoxide-containing fatty acids. Active in vitro against epoxyeicosatrienoic acids (EETs) including 8,9-EET, 9,10-EET, 11,12-EET and 14,15-EET and leukotoxin. This is Epoxide hydrolase 3 (EPHX3) from Homo sapiens (Human).